Here is a 479-residue protein sequence, read N- to C-terminus: GTPase Der (479 aa).

EngA-type G domains follow at residues 3-167 (FKVA…GEAR) and 208-383 (MRIA…KVWN). GTP contacts are provided by residues 9 to 16 (GRPNVGKS), 56 to 60 (DTAGF), 119 to 122 (NKAE), 214 to 221 (GRPNAGKS), 261 to 265 (DTAGM), and 326 to 329 (NKWD). The KH-like domain occupies 384 to 468 (SRVSTGKLNR…PIRIALRTSD (85 aa)).

It belongs to the TRAFAC class TrmE-Era-EngA-EngB-Septin-like GTPase superfamily. EngA (Der) GTPase family. In terms of assembly, associates with the 50S ribosomal subunit.

GTPase that plays an essential role in the late steps of ribosome biogenesis. The sequence is that of GTPase Der from Mesorhizobium japonicum (strain LMG 29417 / CECT 9101 / MAFF 303099) (Mesorhizobium loti (strain MAFF 303099)).